We begin with the raw amino-acid sequence, 690 residues long: Protein arginine N-methyltransferase 7 (690 aa).

SAM-dependent MTase PRMT-type domains are found at residues 14–357 (ENSW…YSLW) and 366–690 (AKSV…QKKP).

The protein belongs to the class I-like SAM-binding methyltransferase superfamily. Protein arginine N-methyltransferase family. PRMT7 subfamily.

Essential arginine methyltransferase that can both catalyze the formation of omega-N monomethylarginine (MMA) and symmetrical dimethylarginine (sDMA). Specifically mediates the symmetrical dimethylation of arginine residues in the small nuclear ribonucleoproteins SmD1 and SmD3. The chain is Protein arginine N-methyltransferase 7 (Art7) from Drosophila ananassae (Fruit fly).